We begin with the raw amino-acid sequence, 264 residues long: 3'-5' ssDNA/RNA exonuclease TatD (264 aa).

Residues E92, H128, and H153 each contribute to the a divalent metal cation site.

This sequence belongs to the metallo-dependent hydrolases superfamily. TatD-type hydrolase family. TatD subfamily. As to quaternary structure, monomer. Mg(2+) serves as cofactor.

It localises to the cytoplasm. Its function is as follows. 3'-5' exonuclease that prefers single-stranded DNA and RNA. May play a role in the H(2)O(2)-induced DNA damage repair. This is 3'-5' ssDNA/RNA exonuclease TatD from Dickeya dadantii (strain 3937) (Erwinia chrysanthemi (strain 3937)).